We begin with the raw amino-acid sequence, 284 residues long: MEMO1 family protein SSO0066 (284 aa).

Belongs to the MEMO1 family.

The sequence is that of MEMO1 family protein SSO0066 from Saccharolobus solfataricus (strain ATCC 35092 / DSM 1617 / JCM 11322 / P2) (Sulfolobus solfataricus).